A 171-amino-acid polypeptide reads, in one-letter code: Calcium-binding allergen Ole e 8 (171 aa).

4 consecutive EF-hand domains span residues 16-51, 52-87, 92-127, and 128-163; these read QEPNEVQGVFNRFDANGDGKISGDELAGVLKALGSN, TSKEEIGRIMEEIDTDKDGFINVQEFAAFVKAETDP, GGENELKEAFELYDQDHNGLISSVELHKILTRLGER, and YAEHDCVEMIKSVDSDGDGYVSFEEFKKMMTNKSGN. Residues D29, N31, D33, K35, E40, D65, D67, D69, E76, D105, D107, N109, E116, D141, D143, D145, Y147, and E152 each coordinate Ca(2+).

As to quaternary structure, homodimer. In terms of tissue distribution, expressed in pollen.

The polypeptide is Calcium-binding allergen Ole e 8 (Olea europaea (Common olive)).